A 105-amino-acid polypeptide reads, in one-letter code: Circadian clock oscillator protein KaiB (105 aa).

The protein belongs to the KaiB family. As to quaternary structure, the KaiABC complex composition changes during the circadian cycle to control KaiC phosphorylation. Complexes KaiC(6), KaiA(2-4):KaiC(6), KaiB(6):KaiC(6) and KaiC(6):KaiB(6):KaiA(12) are among the most important forms, many form cooperatively. Undergoes a major conformational rearrangment; in the free state forms homotetramers as a dimer of dimers. When bound to the CI domain of KaiC switches to a monomeric thioredoxin-fold (KaiB(fs)). KaiB(fs) binds CikA, leading it to dephosphorylate phospho-RpaA.

Functionally, key component of the KaiABC oscillator complex, which constitutes the main circadian regulator in cyanobacteria. Complex composition changes during the circadian cycle to control KaiC phosphorylation. KaiA stimulates KaiC autophosphorylation, while KaiB sequesters KaiA, leading to KaiC autodephosphorylation. Phospho-Ser-431 KaiC accumulation triggers binding of KaiB to form the KaiB(6):KaiC(6) complex, leading to changes in output regulators CikA and SasA. KaiB switches to a thioredoxin-like fold (KaiB(fs)) when bound to KaiC. KaiB(6):KaiC(6) formation exposes a site for KaiA binding that sequesters KaiA from KaiC, making the KaiC(6):KaiB(6):KaiA(12) complex that results in KaiC autodephosphorylation. Its function is as follows. A metamorphic protein which reversibly switches between an inactive tetrameric fold and a rare, thioredoxin-like monomeric fold (KaiB(fs)). KaiB(fs) binds phospho-KaiC, KaiA and CikA. KaiA and CikA compete for binding to KaiB(fs), and KaiB(fs) and SasA compete for binding to KaiC, thus the clock oscillator and output signal pathway are tightly coupled. This is Circadian clock oscillator protein KaiB from Cyanothece sp. (strain PCC 7425 / ATCC 29141).